Here is a 170-residue protein sequence, read N- to C-terminus: uncharacterized protein (170 aa).

Positions 1 to 26 (MLKKKWMVGLLAGCLAAGGFSYNAFA) are cleaved as a signal peptide.

This is an uncharacterized protein from Bacillus subtilis (strain 168).